The chain runs to 398 residues: Dual specificity mitogen-activated protein kinase kinase 2 (398 aa).

Residues 1–29 (MPAKRKPVLPALTITPSPAEGPGPGGSAE) are disordered. A Protein kinase domain is found at 70-367 (FERISELGAG…LKMLMNHTFI (298 aa)). ATP-binding positions include 76-84 (LGAGNGGVV) and K99. D192 serves as the catalytic Proton acceptor. A phosphoserine; by RAF mark is found at S220 and S224.

The protein belongs to the protein kinase superfamily. STE Ser/Thr protein kinase family. MAP kinase kinase subfamily. Post-translationally, activated by phosphorylation on Ser/Thr catalyzed by MAP kinase kinase kinases (RAF).

The enzyme catalyses L-seryl-[protein] + ATP = O-phospho-L-seryl-[protein] + ADP + H(+). It catalyses the reaction L-threonyl-[protein] + ATP = O-phospho-L-threonyl-[protein] + ADP + H(+). It carries out the reaction L-tyrosyl-[protein] + ATP = O-phospho-L-tyrosyl-[protein] + ADP + H(+). Catalyzes the concomitant phosphorylation of a threonine and a tyrosine residue in a Thr-Glu-Tyr sequence located in MAP kinases. Activates the ERK1 and ERK2 MAP kinases. The sequence is that of Dual specificity mitogen-activated protein kinase kinase 2 (MAP2K2) from Gallus gallus (Chicken).